A 322-amino-acid chain; its full sequence is Glucokinase (322 aa).

10–15 provides a ligand contact to ATP; that stretch reads GDIGGT.

Belongs to the bacterial glucokinase family.

It is found in the cytoplasm. It catalyses the reaction D-glucose + ATP = D-glucose 6-phosphate + ADP + H(+). The polypeptide is Glucokinase (Hahella chejuensis (strain KCTC 2396)).